Here is a 293-residue protein sequence, read N- to C-terminus: MTDSTRSLRNCLAPAKLNLFLHITGRRPNGYHDLQSVFQLLNWGDTLHFTLRDDGKVARATDVPGVPEQSDLVVRAANLLKAHTGTAAGVDIEIDKCLPMGAGLGGGSSDAATTLLALNRLWQLDLPRAELQSLAVKLGADVPFFVFGKNAFAEGIGEELAEVELPTRWFLVVTPRVHVPTAEIFSDELLTRDSKPVTITDFLAQQSSDARWPDSFGRNDMQQVVTSKYAEVAQVVKWLYNVAPARMTGSGASVFAAFQSKQQAEAAKAQLPAGWNGAVAESLNEHPLFAFAS.

K16 is an active-site residue. 99–109 is an ATP binding site; sequence PMGAGLGGGSS. Residue D141 is part of the active site.

The protein belongs to the GHMP kinase family. IspE subfamily.

It catalyses the reaction 4-CDP-2-C-methyl-D-erythritol + ATP = 4-CDP-2-C-methyl-D-erythritol 2-phosphate + ADP + H(+). The protein operates within isoprenoid biosynthesis; isopentenyl diphosphate biosynthesis via DXP pathway; isopentenyl diphosphate from 1-deoxy-D-xylulose 5-phosphate: step 3/6. In terms of biological role, catalyzes the phosphorylation of the position 2 hydroxy group of 4-diphosphocytidyl-2C-methyl-D-erythritol. The chain is 4-diphosphocytidyl-2-C-methyl-D-erythritol kinase from Burkholderia multivorans (strain ATCC 17616 / 249).